The primary structure comprises 309 residues: Porphobilinogen deaminase (309 aa).

C242 is modified (S-(dipyrrolylmethanemethyl)cysteine).

It belongs to the HMBS family. As to quaternary structure, monomer. Dipyrromethane serves as cofactor.

It carries out the reaction 4 porphobilinogen + H2O = hydroxymethylbilane + 4 NH4(+). Its pathway is porphyrin-containing compound metabolism; protoporphyrin-IX biosynthesis; coproporphyrinogen-III from 5-aminolevulinate: step 2/4. Tetrapolymerization of the monopyrrole PBG into the hydroxymethylbilane pre-uroporphyrinogen in several discrete steps. The protein is Porphobilinogen deaminase of Pseudoalteromonas atlantica (strain T6c / ATCC BAA-1087).